We begin with the raw amino-acid sequence, 455 residues long: Bifunctional protein GlmU (455 aa).

Residues 1–226 (MSLDIVILAA…PMEVQGANDR (226 aa)) are pyrophosphorylase. Residues 8–11 (LAAG), K22, Q73, 78–79 (GT), 99–101 (YGD), G136, E151, N166, and N224 contribute to the UDP-N-acetyl-alpha-D-glucosamine site. D101 is a binding site for Mg(2+). N224 is a Mg(2+) binding site. Positions 227–247 (RQLSELERHYQLREGRRLMAQ) are linker. An N-acetyltransferase region spans residues 248–455 (GVTLRDPARF…WKRPEKTKKS (208 aa)). UDP-N-acetyl-alpha-D-glucosamine-binding residues include R330 and K348. Residue H360 is the Proton acceptor of the active site. Y363 and N374 together coordinate UDP-N-acetyl-alpha-D-glucosamine. Residues A377, 383 to 384 (NY), S402, A420, and R437 each bind acetyl-CoA.

In the N-terminal section; belongs to the N-acetylglucosamine-1-phosphate uridyltransferase family. This sequence in the C-terminal section; belongs to the transferase hexapeptide repeat family. In terms of assembly, homotrimer. Mg(2+) serves as cofactor.

The protein resides in the cytoplasm. It catalyses the reaction alpha-D-glucosamine 1-phosphate + acetyl-CoA = N-acetyl-alpha-D-glucosamine 1-phosphate + CoA + H(+). It carries out the reaction N-acetyl-alpha-D-glucosamine 1-phosphate + UTP + H(+) = UDP-N-acetyl-alpha-D-glucosamine + diphosphate. Its pathway is nucleotide-sugar biosynthesis; UDP-N-acetyl-alpha-D-glucosamine biosynthesis; N-acetyl-alpha-D-glucosamine 1-phosphate from alpha-D-glucosamine 6-phosphate (route II): step 2/2. The protein operates within nucleotide-sugar biosynthesis; UDP-N-acetyl-alpha-D-glucosamine biosynthesis; UDP-N-acetyl-alpha-D-glucosamine from N-acetyl-alpha-D-glucosamine 1-phosphate: step 1/1. It functions in the pathway bacterial outer membrane biogenesis; LPS lipid A biosynthesis. In terms of biological role, catalyzes the last two sequential reactions in the de novo biosynthetic pathway for UDP-N-acetylglucosamine (UDP-GlcNAc). The C-terminal domain catalyzes the transfer of acetyl group from acetyl coenzyme A to glucosamine-1-phosphate (GlcN-1-P) to produce N-acetylglucosamine-1-phosphate (GlcNAc-1-P), which is converted into UDP-GlcNAc by the transfer of uridine 5-monophosphate (from uridine 5-triphosphate), a reaction catalyzed by the N-terminal domain. This is Bifunctional protein GlmU from Pseudomonas putida (strain GB-1).